Reading from the N-terminus, the 295-residue chain is uncharacterized protein (295 aa).

Residues 1–13 (MRHSVARPTRLPR) are compositionally biased toward basic residues. 2 disordered regions span residues 1 to 111 (MRHS…AGLS) and 183 to 295 (TSAF…PRDS). Positions 57-67 (AGPSAGAAARP) are enriched in low complexity. Residues 68–77 (AAPPPQPREP) are compositionally biased toward pro residues. Basic and acidic residues-rich tracts occupy residues 245–257 (LRPKGARADDRRP) and 280–295 (GEPHKAGEVGNHPRDS).

This is an uncharacterized protein from Homo sapiens (Human).